Reading from the N-terminus, the 246-residue chain is Zorya protein ZorB (246 aa).

A helical transmembrane segment spans residues 20 to 40 (FWISYADLMTAMMVLFLVVMV). The 133-residue stretch at 86–218 (CHDNRISFGE…RVELRMQFFG (133 aa)) folds into the OmpA-like domain.

It belongs to the MotB family.

The protein localises to the cell inner membrane. Its function is as follows. Component of antiviral defense system Zorya type I, composed of ZorA, ZorB, ZorC and ZorD. Expression of Zorya type I in E.coli (strain MG1655) confers 10,000-fold resistance to phage SECphi27, 100-fold resistance to lambda, and 10-fold resistance to T7. While most T7 infected Zorya-containing cells undergo abortive infection, a minority produce viable phage progeny. These eventually accumulate to a high multiplicity of infection, leading to culture collapse by 2 hours after initial infection. ZorA and ZorB probably assemble in the cell inner membrane and exert their effect there. The protein is Zorya protein ZorB of Escherichia coli O139:H28 (strain E24377A / ETEC).